The sequence spans 433 residues: 23S rRNA (uracil(1939)-C(5))-methyltransferase RlmD (433 aa).

In terms of domain architecture, TRAM spans 10–68 (RTTTRQIITVSVNDLDSFGQGVARHNGKTLFIPGLLPQENAEVTVTEDKKQYARAKVVR). [4Fe-4S] cluster contacts are provided by Cys81, Cys87, Cys90, and Cys162. Residues Gln265, Phe294, Asn299, Glu315, Asn342, and Asp363 each coordinate S-adenosyl-L-methionine. The active-site Nucleophile is Cys389.

Belongs to the class I-like SAM-binding methyltransferase superfamily. RNA M5U methyltransferase family. RlmD subfamily.

The catalysed reaction is uridine(1939) in 23S rRNA + S-adenosyl-L-methionine = 5-methyluridine(1939) in 23S rRNA + S-adenosyl-L-homocysteine + H(+). In terms of biological role, catalyzes the formation of 5-methyl-uridine at position 1939 (m5U1939) in 23S rRNA. This Shigella sonnei (strain Ss046) protein is 23S rRNA (uracil(1939)-C(5))-methyltransferase RlmD.